The chain runs to 317 residues: Melanoma-associated antigen 4 (317 aa).

A compositionally biased stretch (basic and acidic residues) spans 1-14; sequence MSSEQKSQHCKPEE. Residues 1–102 are disordered; the sequence is MSSEQKSQHC…EEGPSTSPDA (102 aa). Polar residues predominate over residues 66 to 82; it reads PQGASALPTTISFTCWR. The MAGE domain maps to 110-309; it reads LSNKVDELAH…IAYPSLREAA (200 aa).

Expressed in many tumors of several types, such as melanoma, head and neck squamous cell carcinoma, lung carcinoma and breast carcinoma, but not in normal tissues except for testes and placenta.

Regulates cell proliferation through the inhibition of cell cycle arrest at the G1 phase. Also negatively regulates p53-mediated apoptosis. This Homo sapiens (Human) protein is Melanoma-associated antigen 4 (MAGEA4).